The sequence spans 734 residues: DNA ligase (734 aa).

NAD(+)-binding positions include 42–46, 91–92, and glutamate 125; these read DAEYD and SL. Lysine 127 functions as the N6-AMP-lysine intermediate in the catalytic mechanism. Positions 148, 185, 301, and 325 each coordinate NAD(+). Cysteine 430, cysteine 433, cysteine 454, and cysteine 460 together coordinate Zn(2+). The region spanning 655 to 734 is the BRCT domain; it reads SADSEVAGKT…DTWLQRVGKA (80 aa).

It belongs to the NAD-dependent DNA ligase family. LigA subfamily. Mg(2+) serves as cofactor. Requires Mn(2+) as cofactor.

The catalysed reaction is NAD(+) + (deoxyribonucleotide)n-3'-hydroxyl + 5'-phospho-(deoxyribonucleotide)m = (deoxyribonucleotide)n+m + AMP + beta-nicotinamide D-nucleotide.. Its function is as follows. DNA ligase that catalyzes the formation of phosphodiester linkages between 5'-phosphoryl and 3'-hydroxyl groups in double-stranded DNA using NAD as a coenzyme and as the energy source for the reaction. It is essential for DNA replication and repair of damaged DNA. This Mesorhizobium japonicum (strain LMG 29417 / CECT 9101 / MAFF 303099) (Mesorhizobium loti (strain MAFF 303099)) protein is DNA ligase.